A 300-amino-acid chain; its full sequence is Protoheme IX farnesyltransferase (300 aa).

A run of 9 helical transmembrane segments spans residues 20–40, 43–63, 94–114, 116–136, 142–162, 173–193, 215–235, 241–261, and 276–296; these read ITKM…YFLG, TIDF…VGAS, PVAF…LYVI, PKTA…YTPL, LSVF…WVAA, LFMI…WWLF, IQII…VFGV, LTPV…YYAI, and MFAS…DKFI.

This sequence belongs to the UbiA prenyltransferase family. Protoheme IX farnesyltransferase subfamily.

It localises to the cell membrane. The catalysed reaction is heme b + (2E,6E)-farnesyl diphosphate + H2O = Fe(II)-heme o + diphosphate. It participates in porphyrin-containing compound metabolism; heme O biosynthesis; heme O from protoheme: step 1/1. In terms of biological role, converts heme B (protoheme IX) to heme O by substitution of the vinyl group on carbon 2 of heme B porphyrin ring with a hydroxyethyl farnesyl side group. In Christiangramia forsetii (strain DSM 17595 / CGMCC 1.15422 / KT0803) (Gramella forsetii), this protein is Protoheme IX farnesyltransferase.